Reading from the N-terminus, the 416-residue chain is Serine hydroxymethyltransferase (416 aa).

(6S)-5,6,7,8-tetrahydrofolate contacts are provided by residues Leu-121 and 125-127; that span reads GHL. Lys-229 is subject to N6-(pyridoxal phosphate)lysine.

This sequence belongs to the SHMT family. In terms of assembly, homodimer. Requires pyridoxal 5'-phosphate as cofactor.

Its subcellular location is the cytoplasm. It catalyses the reaction (6R)-5,10-methylene-5,6,7,8-tetrahydrofolate + glycine + H2O = (6S)-5,6,7,8-tetrahydrofolate + L-serine. It functions in the pathway one-carbon metabolism; tetrahydrofolate interconversion. It participates in amino-acid biosynthesis; glycine biosynthesis; glycine from L-serine: step 1/1. Functionally, catalyzes the reversible interconversion of serine and glycine with tetrahydrofolate (THF) serving as the one-carbon carrier. This reaction serves as the major source of one-carbon groups required for the biosynthesis of purines, thymidylate, methionine, and other important biomolecules. Also exhibits THF-independent aldolase activity toward beta-hydroxyamino acids, producing glycine and aldehydes, via a retro-aldol mechanism. This Azoarcus sp. (strain BH72) protein is Serine hydroxymethyltransferase.